A 306-amino-acid chain; its full sequence is Ornithine carbamoyltransferase (306 aa).

Residues 53–56, glutamine 80, arginine 104, and 131–134 contribute to the carbamoyl phosphate site; these read STRT and HPCQ. Residues asparagine 162, aspartate 219, and 223-224 each bind L-ornithine; that span reads SM. Carbamoyl phosphate-binding positions include 259 to 260 and arginine 287; that span reads CL.

The protein belongs to the aspartate/ornithine carbamoyltransferase superfamily. OTCase family.

Its subcellular location is the cytoplasm. The catalysed reaction is carbamoyl phosphate + L-ornithine = L-citrulline + phosphate + H(+). The protein operates within amino-acid biosynthesis; L-arginine biosynthesis; L-arginine from L-ornithine and carbamoyl phosphate: step 1/3. In terms of biological role, reversibly catalyzes the transfer of the carbamoyl group from carbamoyl phosphate (CP) to the N(epsilon) atom of ornithine (ORN) to produce L-citrulline. This is Ornithine carbamoyltransferase from Acinetobacter baylyi (strain ATCC 33305 / BD413 / ADP1).